The sequence spans 470 residues: ATP synthase subunit beta (470 aa).

151–158 (GGAGVGKT) lines the ATP pocket.

The protein belongs to the ATPase alpha/beta chains family. F-type ATPases have 2 components, CF(1) - the catalytic core - and CF(0) - the membrane proton channel. CF(1) has five subunits: alpha(3), beta(3), gamma(1), delta(1), epsilon(1). CF(0) has three main subunits: a(1), b(2) and c(9-12). The alpha and beta chains form an alternating ring which encloses part of the gamma chain. CF(1) is attached to CF(0) by a central stalk formed by the gamma and epsilon chains, while a peripheral stalk is formed by the delta and b chains.

The protein resides in the cell membrane. The catalysed reaction is ATP + H2O + 4 H(+)(in) = ADP + phosphate + 5 H(+)(out). In terms of biological role, produces ATP from ADP in the presence of a proton gradient across the membrane. The catalytic sites are hosted primarily by the beta subunits. The polypeptide is ATP synthase subunit beta (Mycoplasma mobile (strain ATCC 43663 / 163K / NCTC 11711) (Mesomycoplasma mobile)).